The following is a 519-amino-acid chain: Protein nucleotidyltransferase YdiU (519 aa).

Gly-101, Gly-103, Arg-104, Lys-124, Asp-136, Gly-137, Arg-194, and Arg-201 together coordinate ATP. Asp-271 functions as the Proton acceptor in the catalytic mechanism. Residues Asn-272 and Asp-281 each coordinate Mg(2+). Asp-281 serves as a coordination point for ATP.

The protein belongs to the SELO family. The cofactor is Mg(2+). It depends on Mn(2+) as a cofactor.

It catalyses the reaction L-seryl-[protein] + ATP = 3-O-(5'-adenylyl)-L-seryl-[protein] + diphosphate. The enzyme catalyses L-threonyl-[protein] + ATP = 3-O-(5'-adenylyl)-L-threonyl-[protein] + diphosphate. It carries out the reaction L-tyrosyl-[protein] + ATP = O-(5'-adenylyl)-L-tyrosyl-[protein] + diphosphate. The catalysed reaction is L-histidyl-[protein] + UTP = N(tele)-(5'-uridylyl)-L-histidyl-[protein] + diphosphate. It catalyses the reaction L-seryl-[protein] + UTP = O-(5'-uridylyl)-L-seryl-[protein] + diphosphate. The enzyme catalyses L-tyrosyl-[protein] + UTP = O-(5'-uridylyl)-L-tyrosyl-[protein] + diphosphate. Nucleotidyltransferase involved in the post-translational modification of proteins. It can catalyze the addition of adenosine monophosphate (AMP) or uridine monophosphate (UMP) to a protein, resulting in modifications known as AMPylation and UMPylation. The sequence is that of Protein nucleotidyltransferase YdiU from Azoarcus sp. (strain BH72).